The chain runs to 458 residues: Bifunctional protein GlmU (458 aa).

Residues 1–232 (MTSSLSVIIL…TFEIEGVNNR (232 aa)) are pyrophosphorylase. Residues 10–13 (LAAG), lysine 24, glutamine 79, 84–85 (GT), 106–108 (YGD), glycine 142, glutamate 157, asparagine 172, and asparagine 230 each bind UDP-N-acetyl-alpha-D-glucosamine. Residue aspartate 108 coordinates Mg(2+). Asparagine 230 serves as a coordination point for Mg(2+). Residues 233–253 (QQLASLERTWQGKLVADLQEA) are linker. Residues 254–458 (GVQFADPTRV…KNDFKRPTKK (205 aa)) are N-acetyltransferase. Residues arginine 336 and lysine 354 each contribute to the UDP-N-acetyl-alpha-D-glucosamine site. The active-site Proton acceptor is histidine 366. UDP-N-acetyl-alpha-D-glucosamine-binding residues include tyrosine 369 and asparagine 380. Residues alanine 383, 389–390 (NY), serine 408, alanine 426, and arginine 443 contribute to the acetyl-CoA site.

It in the N-terminal section; belongs to the N-acetylglucosamine-1-phosphate uridyltransferase family. This sequence in the C-terminal section; belongs to the transferase hexapeptide repeat family. As to quaternary structure, homotrimer. Mg(2+) is required as a cofactor.

It is found in the cytoplasm. It catalyses the reaction alpha-D-glucosamine 1-phosphate + acetyl-CoA = N-acetyl-alpha-D-glucosamine 1-phosphate + CoA + H(+). It carries out the reaction N-acetyl-alpha-D-glucosamine 1-phosphate + UTP + H(+) = UDP-N-acetyl-alpha-D-glucosamine + diphosphate. It participates in nucleotide-sugar biosynthesis; UDP-N-acetyl-alpha-D-glucosamine biosynthesis; N-acetyl-alpha-D-glucosamine 1-phosphate from alpha-D-glucosamine 6-phosphate (route II): step 2/2. Its pathway is nucleotide-sugar biosynthesis; UDP-N-acetyl-alpha-D-glucosamine biosynthesis; UDP-N-acetyl-alpha-D-glucosamine from N-acetyl-alpha-D-glucosamine 1-phosphate: step 1/1. It functions in the pathway bacterial outer membrane biogenesis; LPS lipid A biosynthesis. In terms of biological role, catalyzes the last two sequential reactions in the de novo biosynthetic pathway for UDP-N-acetylglucosamine (UDP-GlcNAc). The C-terminal domain catalyzes the transfer of acetyl group from acetyl coenzyme A to glucosamine-1-phosphate (GlcN-1-P) to produce N-acetylglucosamine-1-phosphate (GlcNAc-1-P), which is converted into UDP-GlcNAc by the transfer of uridine 5-monophosphate (from uridine 5-triphosphate), a reaction catalyzed by the N-terminal domain. The chain is Bifunctional protein GlmU from Psychrobacter cryohalolentis (strain ATCC BAA-1226 / DSM 17306 / VKM B-2378 / K5).